The chain runs to 270 residues: Glutamate racemase (270 aa).

Substrate-binding positions include 7–8 (DS) and 39–40 (YG). The Proton donor/acceptor role is filled by Cys-70. Substrate is bound at residue 71 to 72 (NT). The Proton donor/acceptor role is filled by Cys-194. 195-196 (TH) provides a ligand contact to substrate.

The protein belongs to the aspartate/glutamate racemases family.

The catalysed reaction is L-glutamate = D-glutamate. It functions in the pathway cell wall biogenesis; peptidoglycan biosynthesis. In terms of biological role, provides the (R)-glutamate required for cell wall biosynthesis. The sequence is that of Glutamate racemase from Cereibacter sphaeroides (strain ATCC 17023 / DSM 158 / JCM 6121 / CCUG 31486 / LMG 2827 / NBRC 12203 / NCIMB 8253 / ATH 2.4.1.) (Rhodobacter sphaeroides).